The sequence spans 551 residues: L-lactate permease (551 aa).

Transmembrane regions (helical) follow at residues 13–33 (NIWLSSLIASLPILFFFFALI), 37–57 (LKGYVAASWTVAIALAVALLF), 69–89 (VVYGFFYGLWPIAWIIIAAVF), 131–151 (GAAGFGAPVAITAALLVGLGF), 159–179 (LCLIVNTAPVAFGAMGIPILV), 194–214 (MVGRQLPFMTIIVLFWIMAIM), 220–240 (IKETWPAVVVAGGSFAIAQYL), 244–264 (FIGPELPDIISSLVSLLCLTL), 366–386 (FDWFSATGTAILFAALLSIVW), 405–425 (LALPIYSIGMVLAFAFISNYS), 438–458 (TGHAFTFFSPFLGWLGVFLTG), 494–514 (VTGKMISPQSIAIACAAVGLV), and 530–550 (IFTCIVGVITTLQAYVLTWMI).

It belongs to the lactate permease family.

The protein localises to the cell inner membrane. It catalyses the reaction (S)-lactate(in) + H(+)(in) = (S)-lactate(out) + H(+)(out). It carries out the reaction (R)-lactate(in) + H(+)(in) = (R)-lactate(out) + H(+)(out). The enzyme catalyses glycolate(in) + H(+)(in) = glycolate(out) + H(+)(out). Its activity is regulated as follows. Inhibited by the proton ionophore carbonyl cyanide m-chlorophenylhydrazone (CCCP). In terms of biological role, uptake of L-lactate across the membrane. Can also transport D-lactate and glycolate. Seems to be driven by a proton motive force. The polypeptide is L-lactate permease (Escherichia coli (strain K12)).